Reading from the N-terminus, the 395-residue chain is Probable L-tyrosine/L-aspartate decarboxylase (395 aa).

At Lys242 the chain carries N6-(pyridoxal phosphate)lysine.

The protein belongs to the group II decarboxylase family. MfnA subfamily. It depends on pyridoxal 5'-phosphate as a cofactor.

It catalyses the reaction L-tyrosine + H(+) = tyramine + CO2. The enzyme catalyses L-aspartate + H(+) = beta-alanine + CO2. It participates in cofactor biosynthesis; methanofuran biosynthesis. It functions in the pathway cofactor biosynthesis; coenzyme A biosynthesis. In terms of biological role, catalyzes the decarboxylation of L-tyrosine to produce tyramine for methanofuran biosynthesis. Can also catalyze the decarboxylation of L-aspartate to produce beta-alanine for coenzyme A (CoA) biosynthesis. In Methanosarcina acetivorans (strain ATCC 35395 / DSM 2834 / JCM 12185 / C2A), this protein is Probable L-tyrosine/L-aspartate decarboxylase.